Consider the following 237-residue polypeptide: Lectin alpha chain (237 aa).

Mn(2+) contacts are provided by glutamate 8 and aspartate 10. Residues aspartate 10, tyrosine 12, asparagine 14, and aspartate 19 each coordinate Ca(2+). Position 12 (tyrosine 12) interacts with a carbohydrate. Aspartate 19, histidine 24, and serine 34 together coordinate Mn(2+). 99–100 (LY) is an a carbohydrate binding site. Aspartate 208 serves as a coordination point for Ca(2+). Position 228 (arginine 228) interacts with a carbohydrate.

Belongs to the leguminous lectin family. Equilibrium between homodimer and homotetramer. Oligomerization is pH-dependent with homotetramers forming at pH 6.5 and above. Post-translationally, the beta and gamma chains are produced by partial proteolytic processing of the lectin alpha chain by an asparaginyl endopeptidase. Mixture of 60% alpha lectin and 40% of its beta and gamma proteolytic fragments.

Functionally, D-mannose/D-glucose-binding lectin. Has anti-inflammatory activity in rats. Induces histamine release in mast cells from rat. Induces lymphocyte proliferation and IFNG production. This Dioclea guianensis protein is Lectin alpha chain.